We begin with the raw amino-acid sequence, 763 residues long: Phosphoglycerol transferase I (763 aa).

Helical transmembrane passes span 1–21 (MSELLSVALFLASVLIYAWKA), 26–46 (WWFAATLTVLGLFVILNITLY), 77–97 (ILPGIGIALALVAVFGALGWI), and 108–128 (VGYSLLALLLALGSVDASPAF).

The protein belongs to the OpgB family.

Its subcellular location is the cell inner membrane. The enzyme catalyses a phosphatidylglycerol + a membrane-derived-oligosaccharide D-glucose = a 1,2-diacyl-sn-glycerol + a membrane-derived-oligosaccharide 6-(glycerophospho)-D-glucose.. The protein operates within glycan metabolism; osmoregulated periplasmic glucan (OPG) biosynthesis. Functionally, transfers a phosphoglycerol residue from phosphatidylglycerol to the membrane-bound nascent glucan backbones. The polypeptide is Phosphoglycerol transferase I (Salmonella paratyphi B (strain ATCC BAA-1250 / SPB7)).